A 463-amino-acid polypeptide reads, in one-letter code: Cysteine--tRNA ligase (463 aa).

Residue Cys-28 participates in Zn(2+) binding. The 'HIGH' region motif lies at 30–40; the sequence is ITPYDLCHIGH. Zn(2+) is bound by residues Cys-211, His-236, and Glu-240. Residues 268-272 carry the 'KMSKS' region motif; that stretch reads KMSKS. Lys-271 contacts ATP.

This sequence belongs to the class-I aminoacyl-tRNA synthetase family. In terms of assembly, monomer. The cofactor is Zn(2+).

The protein localises to the cytoplasm. It carries out the reaction tRNA(Cys) + L-cysteine + ATP = L-cysteinyl-tRNA(Cys) + AMP + diphosphate. The sequence is that of Cysteine--tRNA ligase from Wigglesworthia glossinidia brevipalpis.